Here is a 194-residue protein sequence, read N- to C-terminus: Orotate phosphoribosyltransferase (194 aa).

Residues arginine 102, lysine 103, lysine 106, histidine 108, and 129–137 (EDVVTTGGS) each bind 5-phospho-alpha-D-ribose 1-diphosphate. Residues threonine 133 and arginine 161 each coordinate orotate.

The protein belongs to the purine/pyrimidine phosphoribosyltransferase family. PyrE subfamily. As to quaternary structure, homodimer. Mg(2+) serves as cofactor.

It carries out the reaction orotidine 5'-phosphate + diphosphate = orotate + 5-phospho-alpha-D-ribose 1-diphosphate. Its pathway is pyrimidine metabolism; UMP biosynthesis via de novo pathway; UMP from orotate: step 1/2. Its function is as follows. Catalyzes the transfer of a ribosyl phosphate group from 5-phosphoribose 1-diphosphate to orotate, leading to the formation of orotidine monophosphate (OMP). This is Orotate phosphoribosyltransferase from Synechococcus sp. (strain CC9902).